Here is a 367-residue protein sequence, read N- to C-terminus: CCN family member 4 (367 aa).

An N-terminal signal peptide occupies residues Met1–Ala22. Positions Arg45–Val118 constitute an IGFBP N-terminal domain. 4 disulfide bridges follow: Cys49-Cys73, Cys53-Cys75, Cys55-Cys76, and Cys62-Cys79. Residue Asn86 is glycosylated (N-linked (GlcNAc...) asparagine). 2 cysteine pairs are disulfide-bonded: Cys87/Cys101 and Cys93/Cys115. In terms of domain architecture, VWFC spans Val121 to Glu186. Asn143 is a glycosylation site (N-linked (GlcNAc...) asparagine). The TSP type-1 domain maps to Asn215–Asp260. Cystine bridges form between Cys273-Cys310, Cys290-Cys324, Cys301-Cys340, Cys304-Cys342, and Cys309-Cys346. In terms of domain architecture, CTCK spans Cys273–Arg347. Asn284 carries N-linked (GlcNAc...) asparagine glycosylation. The N-linked (GlcNAc...) asparagine glycan is linked to Asn343.

The protein belongs to the CCN family. In terms of tissue distribution, expressed in heart, kidney, lung, pancreas, placenta, ovary, small intestine and spleen. Isoform 2 is expressed predominantly in scirrhous gastric carcinoma and, weakly in placenta. Overexpression is associated with several cancers including breast cancer and colon tumors. Isoform 2 is overexpressed in scirrhous gastric carcinoma.

Its subcellular location is the secreted. Its function is as follows. Downstream regulator in the Wnt/Frizzled-signaling pathway. Associated with cell survival. Attenuates p53-mediated apoptosis in response to DNA damage through activation of AKT kinase. Up-regulates the anti-apoptotic Bcl-X(L) protein. Adheres to skin and melanoma fibroblasts. In vitro binding to skin fibroblasts occurs through the proteoglycans, decorin and biglycan. The protein is CCN family member 4 of Homo sapiens (Human).